Here is a 1077-residue protein sequence, read N- to C-terminus: Teashirt homolog 1-B (1077 aa).

2 disordered regions span residues 1–110 (MPRR…NASY) and 142–179 (NEKASPTTNTDKSSKSEASGPTSDPGTPTTITSSSCTN). Acidic residues predominate over residues 26-36 (TEEDNLEDDGL). Positions 56 to 69 (TQSYQNSPISSATN) are enriched in polar residues. Residues 160–179 (SGPTSDPGTPTTITSSSCTN) are compositionally biased toward low complexity. A C2H2-type 1 zinc finger spans residues 248 to 272 (FRCKDCSAAYDTLVELTVHMNETGH). Residues 274–286 (RDDNRDREAERTK) are compositionally biased toward basic and acidic residues. Residues 274-300 (RDDNRDREAERTKRWSKPRKRSLMEME) form a disordered region. The C2H2-type 2 zinc finger occupies 309–333 (LKCMYCGHSFESLQDLSVHMIKTKH). The tract at residues 362–394 (ALPDSPEQAGISPGASVSESAKDPKAANPYVTP) is disordered. The C2H2-type 3 zinc finger occupies 418 to 442 (LKCMECGSSHDTLQQLTAHMMVTGH). Disordered stretches follow at residues 473–530 (PPTT…KIEP) and 849–873 (GRLTPKSSTPSTVSEKSDADGSSFE). Positions 497–529 (HSEEKKDPEKEKVNIGEVEKKIKEENEDPEKIE) are enriched in basic and acidic residues. Positions 853–862 (PKSSTPSTVS) are enriched in polar residues. The segment at residues 885–955 (RKGRQSNWNP…NVKYQLRRTG (71 aa)) is a DNA-binding region (homeobox). C2H2-type zinc fingers lie at residues 970 to 992 (FFCNDCASQFRTASTYIGHLETH) and 1037 to 1060 (FQCKLCNRTFASKHAVKLHLSKTH).

The protein belongs to the teashirt C2H2-type zinc-finger protein family.

It localises to the nucleus. Its function is as follows. Probable transcriptional regulator involved in developmental processes. May act as a transcriptional repressor (Potential). Involved in two major neuronal regionalization processes: primary anteroposterior (AP) axis patterning of the CNS and segmentation of the cranial neuronal crest (CNS) development. This chain is Teashirt homolog 1-B (tshz1-b), found in Xenopus laevis (African clawed frog).